The primary structure comprises 431 residues: MANSC domain-containing protein 1 (431 aa).

A signal peptide spans 1–26; it reads MFFGGKGSLTYTLVIICFLTLRLAAS. Topologically, residues 27-385 are extracellular; it reads QNCLNKSLED…QYGLPFEKWL (359 aa). Residue N31 is glycosylated (N-linked (GlcNAc...) asparagine). In terms of domain architecture, MANSC spans 33–117; it reads SLEDVVIDIQ…LKPAKGLRSY (85 aa). N-linked (GlcNAc...) asparagine glycosylation is found at N222 and N251. The segment at 236–279 is disordered; the sequence is HTTSATPKPAIRLPTNASVTPSGTSQPQLATTSPPVTTVTSQPP. Residues 250–265 show a composition bias toward polar residues; that stretch reads TNASVTPSGTSQPQLA. The segment covering 266–279 has biased composition (low complexity); that stretch reads TTSPPVTTVTSQPP. N-linked (GlcNAc...) asparagine glycosylation is found at N327 and N352. The segment at 352–372 is disordered; the sequence is NKTASWEGREASPGRSSQGNV. A helical transmembrane segment spans residues 386–408; sequence LIGSLLFGVLFLVIGLVLLGRIL. Over 409–431 the chain is Cytoplasmic; it reads SESLRRKRYSRLDYLINGIYVDI.

It is found in the membrane. This chain is MANSC domain-containing protein 1 (MANSC1), found in Macaca fascicularis (Crab-eating macaque).